The primary structure comprises 661 residues: DNA cross-link repair protein PSO2/SNM1 (661 aa).

Residues 1-44 form a disordered region; the sequence is MSRKSIVQIRRSEVKRKRSSTASSTSEGKTLHKNTHTSSKRQRT. The span at 31–43 shows a compositional bias: basic residues; that stretch reads LHKNTHTSSKRQR. The UBZ4-type zinc-finger motif lies at 144 to 174; it reads VIQCPICLENLSHLELYERETHCDTCIGSDP. The Zn(2+) site is built by Cys147, Cys150, His165, and Cys169.

Belongs to the DNA repair metallo-beta-lactamase (DRMBL) family.

It localises to the nucleus. In terms of biological role, required for DNA interstrand cross-link repair. This requires cleavage of cross-linked DNA to generate DNA double strand breaks (DSBs). This protein has 5' exonuclease activity on single-stranded and double-stranded DNA, which appears to be necessary for the processing of DNA double strand breaks prior to ligation. This is DNA cross-link repair protein PSO2/SNM1 (PSO2) from Saccharomyces cerevisiae (strain ATCC 204508 / S288c) (Baker's yeast).